The primary structure comprises 130 residues: Small ribosomal subunit protein uS9 (130 aa).

The disordered stretch occupies residues Thr-105–Arg-130. The segment covering Lys-111–Arg-130 has biased composition (basic residues).

Belongs to the universal ribosomal protein uS9 family.

This Listeria welshimeri serovar 6b (strain ATCC 35897 / DSM 20650 / CCUG 15529 / CIP 8149 / NCTC 11857 / SLCC 5334 / V8) protein is Small ribosomal subunit protein uS9.